The primary structure comprises 341 residues: S-adenosylmethionine:tRNA ribosyltransferase-isomerase (341 aa).

The protein belongs to the QueA family. In terms of assembly, monomer.

The protein resides in the cytoplasm. It catalyses the reaction 7-aminomethyl-7-carbaguanosine(34) in tRNA + S-adenosyl-L-methionine = epoxyqueuosine(34) in tRNA + adenine + L-methionine + 2 H(+). It participates in tRNA modification; tRNA-queuosine biosynthesis. Transfers and isomerizes the ribose moiety from AdoMet to the 7-aminomethyl group of 7-deazaguanine (preQ1-tRNA) to give epoxyqueuosine (oQ-tRNA). This Clostridium botulinum (strain Alaska E43 / Type E3) protein is S-adenosylmethionine:tRNA ribosyltransferase-isomerase.